Consider the following 490-residue polypeptide: Adenylyltransferase and sulfurtransferase uba4 (490 aa).

Residues 33–54 (EAAKTPPYSDSTETDRGSSSST) form a disordered region. ATP is bound by residues glycine 96, aspartate 117, 124–128 (SNLHR), lysine 141, and 185–186 (DH). Residues cysteine 234 and cysteine 237 each contribute to the Zn(2+) site. Catalysis depends on cysteine 251, which acts as the Glycyl thioester intermediate; for adenylyltransferase activity. Zn(2+)-binding residues include cysteine 323 and cysteine 326. The 110-residue stretch at 379–488 (EHGKPVLLDV…WKREVDSTLP (110 aa)) folds into the Rhodanese domain. Cysteine 443 (cysteine persulfide intermediate; for sulfurtransferase activity) is an active-site residue.

It in the N-terminal section; belongs to the HesA/MoeB/ThiF family. UBA4 subfamily. Zn(2+) serves as cofactor.

It localises to the cytoplasm. Its subcellular location is the cytosol. The enzyme catalyses [molybdopterin-synthase sulfur-carrier protein]-C-terminal Gly-Gly + ATP + H(+) = [molybdopterin-synthase sulfur-carrier protein]-C-terminal Gly-Gly-AMP + diphosphate. It catalyses the reaction [molybdopterin-synthase sulfur-carrier protein]-C-terminal Gly-Gly-AMP + S-sulfanyl-L-cysteinyl-[cysteine desulfurase] + AH2 = [molybdopterin-synthase sulfur-carrier protein]-C-terminal-Gly-aminoethanethioate + L-cysteinyl-[cysteine desulfurase] + A + AMP + 2 H(+). It participates in tRNA modification; 5-methoxycarbonylmethyl-2-thiouridine-tRNA biosynthesis. Its function is as follows. Plays a central role in 2-thiolation of mcm(5)S(2)U at tRNA wobble positions of cytosolic tRNA(Lys), tRNA(Glu) and tRNA(Gln). Also essential during biosynthesis of the molybdenum cofactor. Acts by mediating the C-terminal thiocarboxylation of sulfur carriers URM1 and MOCS2A. Its N-terminus first activates urm1 and MOCS2A as acyl-adenylates (-COAMP), then the persulfide sulfur on the catalytic cysteine is transferred to URM1 and MOCS2A to form thiocarboxylation (-COSH) of their C-terminus. The reaction probably involves hydrogen sulfide that is generated from the persulfide intermediate and that acts as a nucleophile towards URM1 and MOCS2A. Subsequently, a transient disulfide bond is formed. Does not use thiosulfate as sulfur donor; NFS1 probably acting as a sulfur donor for thiocarboxylation reactions. This chain is Adenylyltransferase and sulfurtransferase uba4, found in Pyricularia oryzae (strain 70-15 / ATCC MYA-4617 / FGSC 8958) (Rice blast fungus).